A 95-amino-acid polypeptide reads, in one-letter code: Aspartyl/glutamyl-tRNA(Asn/Gln) amidotransferase subunit C (95 aa).

It belongs to the GatC family. Heterotrimer of A, B and C subunits.

The enzyme catalyses L-glutamyl-tRNA(Gln) + L-glutamine + ATP + H2O = L-glutaminyl-tRNA(Gln) + L-glutamate + ADP + phosphate + H(+). It carries out the reaction L-aspartyl-tRNA(Asn) + L-glutamine + ATP + H2O = L-asparaginyl-tRNA(Asn) + L-glutamate + ADP + phosphate + 2 H(+). Allows the formation of correctly charged Asn-tRNA(Asn) or Gln-tRNA(Gln) through the transamidation of misacylated Asp-tRNA(Asn) or Glu-tRNA(Gln) in organisms which lack either or both of asparaginyl-tRNA or glutaminyl-tRNA synthetases. The reaction takes place in the presence of glutamine and ATP through an activated phospho-Asp-tRNA(Asn) or phospho-Glu-tRNA(Gln). The sequence is that of Aspartyl/glutamyl-tRNA(Asn/Gln) amidotransferase subunit C from Nitrosomonas europaea (strain ATCC 19718 / CIP 103999 / KCTC 2705 / NBRC 14298).